Consider the following 566-residue polypeptide: Multidrug and toxin extrusion protein 1 (566 aa).

M1 bears the N-acetylmethionine mark. Helical transmembrane passes span L37–I57, A72–S92, L120–L140, L152–L172, Y176–V196, A216–W236, S257–Y276, S295–A315, A336–C356, I370–L390, I409–V429, L437–A457, and G543–I563.

Belongs to the multi antimicrobial extrusion (MATE) (TC 2.A.66.1) family. In terms of tissue distribution, highly expressed in kidney and placenta, moderately in stomach, colon, lung, spleen, skeletal muscle and prostate, and slightly in spleen. In the kidney, found in medulla and cortex, especially in the proximal convoluted and straight tubules. No expression was observed in heart, brain, small intestine and liver. Expressed in Sertoli cells in testis.

It is found in the cell membrane. The protein localises to the apical cell membrane. It catalyses the reaction thiamine(out) + H(+)(in) = thiamine(in) + H(+)(out). The catalysed reaction is estrone 3-sulfate(in) + H(+)(out) = estrone 3-sulfate(out) + H(+)(in). It carries out the reaction creatinine(in) + H(+)(out) = creatinine(out) + H(+)(in). The enzyme catalyses agmatine(in) + H(+)(out) = agmatine(out) + H(+)(in). Multidrug efflux pump that functions as a H(+)/organic cation antiporter. Plays a physiological role in the excretion of cationic compounds including endogenous metabolites, drugs, toxins through the kidney and liver, into urine and bile respectively. Mediates the efflux of endogenous compounds such as creatinine, vitamin B1/thiamine, agmatine and estrone-3-sulfate. May also contribute to regulate the transport of cationic compounds in testis across the blood-testis-barrier. The protein is Multidrug and toxin extrusion protein 1 (Slc47a1) of Rattus norvegicus (Rat).